Here is a 959-residue protein sequence, read N- to C-terminus: Vacuolar membrane protease (959 aa).

At Met-1–Pro-13 the chain is on the cytoplasmic side. A helical membrane pass occupies residues Val-14–Leu-34. Residues Arg-35–Thr-378 are Vacuolar-facing. Asn-48, Asn-102, and Asn-105 each carry an N-linked (GlcNAc...) asparagine glycan. The tract at residues Gly-128–Asp-149 is disordered. Residues His-158 and Asp-170 each coordinate Zn(2+). The active-site Proton acceptor is the Glu-204. Residues Glu-205, Glu-230, and His-303 each coordinate Zn(2+). Residues Met-379–Phe-399 form a helical membrane-spanning segment. The Cytoplasmic portion of the chain corresponds to Gly-400 to Gly-432. The helical transmembrane segment at Phe-433–Leu-453 threads the bilayer. The Vacuolar segment spans residues Met-454 to Tyr-463. Residues Ser-464 to Phe-484 form a helical membrane-spanning segment. The Cytoplasmic portion of the chain corresponds to Ser-485–Arg-498. The helical transmembrane segment at Met-499–Leu-519 threads the bilayer. Residues Ser-520–Gln-524 are Vacuolar-facing. The chain crosses the membrane as a helical span at residues Val-525–Ser-545. Topologically, residues Tyr-546 to Lys-645 are cytoplasmic. 2 disordered regions span residues Asp-566–Glu-594 and Phe-606–Pro-635. A compositionally biased stretch (basic and acidic residues) spans Arg-612–Glu-626. The chain crosses the membrane as a helical span at residues Leu-646–Val-666. The Vacuolar segment spans residues Gly-667–Leu-688. Asn-685 carries an N-linked (GlcNAc...) asparagine glycan. The chain crosses the membrane as a helical span at residues Phe-689–Ile-709. The Cytoplasmic portion of the chain corresponds to His-710–Val-716. Residues Pro-717–Phe-737 form a helical membrane-spanning segment. The Vacuolar segment spans residues Ser-738–Val-959. 5 N-linked (GlcNAc...) asparagine glycosylation sites follow: Asn-785, Asn-818, Asn-834, Asn-864, and Asn-899.

This sequence belongs to the peptidase M28 family. Requires Zn(2+) as cofactor.

The protein resides in the vacuole membrane. Functionally, may be involved in vacuolar sorting and osmoregulation. The sequence is that of Vacuolar membrane protease from Phaeosphaeria nodorum (strain SN15 / ATCC MYA-4574 / FGSC 10173) (Glume blotch fungus).